The primary structure comprises 258 residues: MATIHPTALVAPGARLADDVEIGPYSVIGEHVEIGAGTTVGAHAVLTGHTTIGERNKIFHFVSLGEAPQDKKYAGEPTRLEIGDYNVIREFCTFNIGTVQDRGVTRIGHHNWIMAYVHIAHDCVVGDRTIFANNASLAGHAEVGDWAILGGFTGVHQFCKVGAHVMTGISSVVFKDIPPFVMASGQPAAPHGLNNEGLKRRGFSAEALSALKRAYKILYREGNTLAEAQAKLAPEAAKHAEVQQLLDFLARAERGIIR.

Belongs to the transferase hexapeptide repeat family. LpxA subfamily. Homotrimer.

Its subcellular location is the cytoplasm. It catalyses the reaction a (3R)-hydroxyacyl-[ACP] + UDP-N-acetyl-alpha-D-glucosamine = a UDP-3-O-[(3R)-3-hydroxyacyl]-N-acetyl-alpha-D-glucosamine + holo-[ACP]. It functions in the pathway glycolipid biosynthesis; lipid IV(A) biosynthesis; lipid IV(A) from (3R)-3-hydroxytetradecanoyl-[acyl-carrier-protein] and UDP-N-acetyl-alpha-D-glucosamine: step 1/6. Its function is as follows. Involved in the biosynthesis of lipid A, a phosphorylated glycolipid that anchors the lipopolysaccharide to the outer membrane of the cell. The polypeptide is Acyl-[acyl-carrier-protein]--UDP-N-acetylglucosamine O-acyltransferase (Thiobacillus denitrificans (strain ATCC 25259 / T1)).